The primary structure comprises 95 residues: DNA-directed RNA polymerase subunit Rpo11 (95 aa).

The protein belongs to the archaeal Rpo11/eukaryotic RPB11/RPC19 RNA polymerase subunit family. Part of the RNA polymerase complex.

It is found in the cytoplasm. It catalyses the reaction RNA(n) + a ribonucleoside 5'-triphosphate = RNA(n+1) + diphosphate. DNA-dependent RNA polymerase (RNAP) catalyzes the transcription of DNA into RNA using the four ribonucleoside triphosphates as substrates. The protein is DNA-directed RNA polymerase subunit Rpo11 of Pyrococcus abyssi (strain GE5 / Orsay).